Reading from the N-terminus, the 162-residue chain is N5-carboxyaminoimidazole ribonucleotide mutase (162 aa).

Residues Ser11, Asp14, and Arg41 each contribute to the substrate site.

It belongs to the AIR carboxylase family. Class I subfamily.

The catalysed reaction is 5-carboxyamino-1-(5-phospho-D-ribosyl)imidazole + H(+) = 5-amino-1-(5-phospho-D-ribosyl)imidazole-4-carboxylate. It functions in the pathway purine metabolism; IMP biosynthesis via de novo pathway; 5-amino-1-(5-phospho-D-ribosyl)imidazole-4-carboxylate from 5-amino-1-(5-phospho-D-ribosyl)imidazole (N5-CAIR route): step 2/2. In terms of biological role, catalyzes the conversion of N5-carboxyaminoimidazole ribonucleotide (N5-CAIR) to 4-carboxy-5-aminoimidazole ribonucleotide (CAIR). This chain is N5-carboxyaminoimidazole ribonucleotide mutase, found in Brucella melitensis biotype 1 (strain ATCC 23456 / CCUG 17765 / NCTC 10094 / 16M).